The following is a 360-amino-acid chain: uncharacterized protein (360 aa).

Positions 45–148 (EDIEDKILQI…KNKTYVSITP (104 aa)) constitute a THUMP domain.

This is an uncharacterized protein from Methanocaldococcus jannaschii (strain ATCC 43067 / DSM 2661 / JAL-1 / JCM 10045 / NBRC 100440) (Methanococcus jannaschii).